The primary structure comprises 2185 residues: MGAQVSTQKTGAHETRLNASGNSIIHYTNINYYKDAASNSANRQDFTQDPGKFTEPVKDIMIKSLPALNSPTVEECGYSDRARSITLGNSTITTQECANVVVGYGVWPDYLKDSEATAEDQPTQPDVATCRFYTLDSVQWQKTSPGWWWKLPDALSNLGLFGQNMQYHYLGRTGYTVHVQCNASKFHQGCLLVVCVPEAEMGCATLDNTPSSAELLGGDTAKEFADKPVASGSNKLVQRVVYNAGMGVGVGNLTIFPHQWINLRTNNSATIVMPYTNSVPMDNMFRHNNVTLMVIPFVPLDYCPGSTTYVPITVTIAPMCAEYNGLRLAGHQGLPTMNTPGSCQFLTSDDFQSPSAMPQYDVTPEMRIPGEVKNLMEIAEVDSVVPVQNVGEKVNSMEAYQIPVRSNEGSGTQVFGFPLQPGYSSVFSRTLLGEILNYYTHWSGSIKLTFMFCGSAMATGKFLLAYSPPGAGAPTKRVDAMLGTHVIWDVGLQSSCVLCIPWISQTHYRFVASDEYTAGGFITCWYQTNIVVPADAQSSCYIMCFVSACNDFSVRLLKDTPFISQQNFFQGPVEDAITAAIGRVADTVGTGPTNSEAIPALTAAETGHTSQVVPGDTMQTRHVKNYHSRSESTIENFLCRSACVYFTEYKNSGAKRYAEWVLTPRQAAQLRRKLEFFTYVRFDLELTFVITSTQQPSTTQNQDAQILTHQIMYVPPGGPVPDKVDSYVWQTSTNPSVFWTEGNAPPRMSIPFLSIGNAYSNFYDGWSEFSRNGVYGINTLNNMGTLYARHVNAGSTGPIKSTIRIYFKPKHVKAWIPRPPRLCQYEKAKNVNFQPSGVTTTRQSITTMTNTGAFGQQSGAVYVGNYRVVNRHLATSADWQNCVWESYNRDLLVSTTTAHGCDIIARCQCTTGVYFCASKNKHYPISFEGPGLVEVQESEYYPRRYQSHVLLAAGFSEPGDCGGILRCEHGVIGIVTMGGEGVVGFADIRDLLWLEDDAMEQGVKDYVEQLGNAFGSGFTNQICEQVNLLKESLVGQDSILEKSLKALVKIISALVIVVRNHDDLITVTATLALIGCTSSPWRWLKQKVSQYYGIPMAERQNNSWLKKFTEMTNACKGMEWIAVKIQKFIEWLKVKILPEVREKHEFLNRLKQLPLLESQIATIEQSAPSQSDQEQLFSNVQYFAHYCRKYAPLYAAEAKRVFSLEKKMSNYIQFKSKCRIEPVCLLLHGSPGAGKSVATNLIGRSLAEKLNSSVYSLPPDPDHFDGYKQQAVVIMDDLCQNPDGKDVSLFCQMVSSVDFVPPMAALEEKGILFTSPFVLASTNAGSINAPTVSDSRALARRFHFDMNIEVISMYSQNGKINMPMSVKTCDDECCPVNFKKCCPLVCGKAIQFIDRRTQVRYSLDMLVTEMFREYNHRHSVGTTLEALFQGPPVYREIKISVAPETPPPPAIADLLKSVDSEAVREYCKEKGWLVPEINSTLQIEKHVSRAFICLQALTTFVSVAGIIYIIYKLFAGFQGAYTGVPNQKPRVPTLRQAKVQGPAFEFAVAMMKRNSSTVKTEYGEFTMLGIYDRWAVLPRHAKPGPTILMNDQEVGVLDAKELVDKDGTNLELTLLKLNRNEKFRDIRGFLAKEEVEVNEAVLAINTSKFPNMYIPVGQVTEYGFLNLGGTPTKRMLMYNFPTRAGQCGGVLMSTGKVLGIHVGGNGHQGFSAALLKHYFNDEQGEIEFIESSKDAGFPVINTPSKTKLEPSVFHQVFEGNKEPAVLRSGDPRLKANFEEAIFSKYIGNVNTHVDEYMLEAVDHYAGQLATLDISTEPMKLEDAVYGTEGLEALDLTTSAGYPYVALGIKKRDILSKKTKDLTKLKECMDKYGLNLPMVTYVKDELRSIEKVAKGKSRLIEASSLNDSVAMRQTFGNLYKTFHLNPGVVTGSAVGCDPDLFWSKIPVMLDGHLIAFDYSGYDASLSPVWFACLKMLLEKLGYTHKETNYIDYLCNSHHLYRDKHYFVRGGMPSGCSGTSIFNSMINNIIIRTLMLKVYKGIDLDQFRMIAYGDDVIASYPWPIDASLLAEAGKGYGLIMTPADKGECFNEVTWTNATFLKRYFRADEQYPFLVHPVMPMKDIHESIRWTKDPKNTQDHVRSLCLLAWHNGEHEYEEFIRKIRSVPVGRCLTLPAFSTLRRKWLDSF.

A lipid anchor (N-myristoyl glycine; by host) is attached at Gly-2. The Cytoplasmic segment spans residues 2 to 1495 (GAQVSTQKTG…HVSRAFICLQ (1494 aa)). The amphipathic alpha-helix stretch occupies residues 568-584 (FFQGPVEDAITAAIGRV). Active-site for protease 2A activity residues include His-872 and Asp-890. 2 residues coordinate Zn(2+): Cys-907 and Cys-909. Cys-961 acts as the For protease 2A activity in catalysis. Zn(2+) contacts are provided by Cys-967 and His-969. The segment at 1101 to 1173 (NNSWLKKFTE…EQSAPSQSDQ (73 aa)) is membrane-binding. Residues 1101–1239 (NNSWLKKFTE…SPGAGKSVAT (139 aa)) form an oligomerization region. The tract at residues 1122–1126 (AVKIQ) is RNA-binding. In terms of domain architecture, SF3 helicase spans 1205–1361 (EKKMSNYIQF…SMYSQNGKIN (157 aa)). Zn(2+) contacts are provided by Cys-1369, Cys-1381, and Cys-1386. The C4-type; degenerate zinc finger occupies 1369–1386 (CDDECCPVNFKKCCPLVC). The segment at 1413-1420 (EYNHRHSV) is RNA-binding. Residues 1424–1429 (LEALFQ) are oligomerization. An intramembrane segment occupies 1496-1511 (ALTTFVSVAGIIYIIY). Over 1512-2185 (KLFAGFQGAY…TLRRKWLDSF (674 aa)) the chain is Cytoplasmic. The residue at position 1521 (Tyr-1521) is an O-(5'-phospho-RNA)-tyrosine. The 179-residue stretch at 1541–1719 (GPAFEFAVAM…FSAALLKHYF (179 aa)) folds into the Peptidase C3 domain. Active-site for protease 3C activity residues include His-1580, Glu-1611, and Cys-1687. The RdRp catalytic domain occupies 1950 to 2066 (GHLIAFDYSG…SYPWPIDASL (117 aa)). Residues Asp-1956 and Asp-2052 each coordinate Mg(2+).

The protein belongs to the picornaviruses polyprotein family. Interacts with capsid protein VP1 and capsid protein VP3 to form heterotrimeric protomers. In terms of assembly, interacts with capsid protein VP0, and capsid protein VP3 to form heterotrimeric protomers. Five protomers subsequently associate to form pentamers which serve as building blocks for the capsid. Interacts with capsid protein VP2, capsid protein VP3 and capsid protein VP4 following cleavage of capsid protein VP0. Interacts with host CD55. Interacts with host CXADR. As to quaternary structure, interacts with capsid protein VP1 and capsid protein VP3 in the mature capsid. Interacts with capsid protein VP0 and capsid protein VP1 to form heterotrimeric protomers. Five protomers subsequently associate to form pentamers which serve as building blocks for the capsid. Interacts with capsid protein VP4 in the mature capsid. Interacts with protein 2C; this interaction may be important for virion morphogenesis. In terms of assembly, interacts with capsid protein VP1 and capsid protein VP3. As to quaternary structure, homodimer. Homohexamer; forms a hexameric ring structure with 6-fold symmetry characteristic of AAA+ ATPases. Interacts (via N-terminus) with host RTN3 (via reticulon domain); this interaction is important for viral replication. Interacts with capsid protein VP3; this interaction may be important for virion morphogenesis. In terms of assembly, interacts with protein 3CD. As to quaternary structure, homodimer. Interacts with host GBF1. Interacts (via GOLD domain) with host ACBD3 (via GOLD domain); this interaction allows the formation of a viral protein 3A/ACBD3 heterotetramer with a 2:2 stoichiometry, which will stimulate the recruitment of host PI4KB in order to synthesize PI4P at the viral RNA replication sites. Interacts with RNA-directed RNA polymerase. In terms of assembly, interacts with host TICAM1 (via C-terminus). As to quaternary structure, interacts with protein 3AB and with RNA-directed RNA polymerase. Interacts with Viral protein genome-linked and with protein 3CD. Mg(2+) serves as cofactor. Post-translationally, specific enzymatic cleavages in vivo by the viral proteases yield processing intermediates and the mature proteins. In terms of processing, myristoylation is required for the formation of pentamers during virus assembly. Further assembly of 12 pentamers and a molecule of genomic RNA generates the provirion. During virion maturation, immature virions are rendered infectious following cleavage of VP0 into VP4 and VP2. This maturation seems to be an autocatalytic event triggered by the presence of RNA in the capsid and it is followed by a conformational change infectious virion. Post-translationally, myristoylation is required during RNA encapsidation and formation of the mature virus particle. In terms of processing, VPg is uridylylated by the polymerase into VPg-pUpU. This acts as a nucleotide-peptide primer for the genomic RNA replication.

It localises to the virion. The protein resides in the host cytoplasm. The protein localises to the host cytoplasmic vesicle membrane. It is found in the host nucleus. It carries out the reaction a ribonucleoside 5'-triphosphate + H2O = a ribonucleoside 5'-diphosphate + phosphate + H(+). The catalysed reaction is Selective cleavage of Tyr-|-Gly bond in the picornavirus polyprotein.. The enzyme catalyses RNA(n) + a ribonucleoside 5'-triphosphate = RNA(n+1) + diphosphate. It catalyses the reaction Selective cleavage of Gln-|-Gly bond in the poliovirus polyprotein. In other picornavirus reactions Glu may be substituted for Gln, and Ser or Thr for Gly.. Its activity is regulated as follows. Replication or transcription is subject to high level of random mutations by the nucleotide analog ribavirin. Its function is as follows. Forms an icosahedral capsid of pseudo T=3 symmetry with capsid proteins VP2 and VP3. The capsid is 300 Angstroms in diameter, composed of 60 copies of each capsid protein and enclosing the viral positive strand RNA genome. Capsid protein VP1 mainly forms the vertices of the capsid. Capsid protein VP1 interacts with host CD55 and CXADR to provide virion attachment to target host cells. This attachment induces virion internalization. Tyrosine kinases are probably involved in the entry process. After binding to its receptor, the capsid undergoes conformational changes. Capsid protein VP1 N-terminus (that contains an amphipathic alpha-helix) and capsid protein VP4 are externalized. Together, they shape a pore in the host membrane through which viral genome is translocated to host cell cytoplasm. Forms an icosahedral capsid of pseudo T=3 symmetry with capsid proteins VP2 and VP3. The capsid is 300 Angstroms in diameter, composed of 60 copies of each capsid protein and enclosing the viral positive strand RNA genome. Functionally, lies on the inner surface of the capsid shell. After binding to the host receptor, the capsid undergoes conformational changes. Capsid protein VP4 is released, Capsid protein VP1 N-terminus is externalized, and together, they shape a pore in the host membrane through which the viral genome is translocated into the host cell cytoplasm. In terms of biological role, component of immature procapsids, which is cleaved into capsid proteins VP4 and VP2 after maturation. Allows the capsid to remain inactive before the maturation step. Its function is as follows. Cysteine protease that cleaves viral polyprotein and specific host proteins. It is responsible for the autocatalytic cleavage between the P1 and P2 regions, which is the first cleavage occurring in the polyprotein. Also cleaves the host translation initiation factor EIF4G1, in order to shut down the capped cellular mRNA translation. Inhibits the host nucleus-cytoplasm protein and RNA trafficking by cleaving host members of the nuclear pores. Counteracts stress granule formation probably by antagonizing its assembly or promoting its dissassembly. Cleaves and inhibits host IFIH1/MDA5, thereby inhibiting the type-I IFN production and the establishment of the antiviral state. Cleaves and inhibits host MAVS, thereby inhibiting the type-I IFN production and the establishment of the antiviral state. Plays an essential role in the virus replication cycle by acting as a viroporin. Creates a pore in the host endoplasmic reticulum and as a consequence releases Ca2+ in the cytoplasm of infected cell. In turn, high levels of cytoplasmic calcium may trigger membrane trafficking and transport of viral ER-associated proteins to viroplasms, sites of viral genome replication. Functionally, induces and associates with structural rearrangements of intracellular membranes. Displays RNA-binding, nucleotide binding and NTPase activities. May play a role in virion morphogenesis and viral RNA encapsidation by interacting with the capsid protein VP3. In terms of biological role, localizes the viral replication complex to the surface of membranous vesicles. Together with protein 3CD binds the Cis-Active RNA Element (CRE) which is involved in RNA synthesis initiation. Acts as a cofactor to stimulate the activity of 3D polymerase, maybe through a nucleid acid chaperone activity. Its function is as follows. Localizes the viral replication complex to the surface of membranous vesicles. It inhibits host cell endoplasmic reticulum-to-Golgi apparatus transport and causes the disassembly of the Golgi complex, possibly through GBF1 interaction. This would result in depletion of MHC, trail receptors and IFN receptors at the host cell surface. Plays an essential role in viral RNA replication by recruiting ACBD3 and PI4KB at the viral replication sites, thereby allowing the formation of the rearranged membranous structures where viral replication takes place. Acts as a primer for viral RNA replication and remains covalently bound to viral genomic RNA. VPg is uridylylated prior to priming replication into VPg-pUpU. The oriI viral genomic sequence may act as a template for this. The VPg-pUpU is then used as primer on the genomic RNA poly(A) by the RNA-dependent RNA polymerase to replicate the viral genome. During genome replication, the VPg-RNA linkage is removed by the host TDP2, thereby accelerating replication. During the late stage of the replication cycle, host TDP2 is excluded from sites of viral RNA synthesis and encapsidation, allowing for the generation of progeny virions. Functionally, involved in the viral replication complex and viral polypeptide maturation. It exhibits protease activity with a specificity and catalytic efficiency that is different from protease 3C. Protein 3CD lacks polymerase activity. Protein 3CD binds to the 5'UTR of the viral genome. In terms of biological role, major viral protease that mediates proteolytic processing of the polyprotein. Cleaves host EIF5B, contributing to host translation shutoff. Cleaves also host PABPC1, contributing to host translation shutoff. Cleaves and inhibits host RIGI, thereby inhibiting the type-I IFN production and the establishment of the antiviral state. Cleaves and inhibits host MAVS, thereby inhibiting the type-I IFN production and the establishment of the antiviral state. Cleaves and inhibits host TICAM1/TRIF, thereby inhibiting the type-I IFN production. Cleaves host NLRP1, triggers host N-glycine-mediated degradation of the autoinhibitory NLRP1 N-terminal fragment. Cleaves host transcription factor TFEB, thereby disrupting host lysosomal functions and enhancing viral infection. Its function is as follows. Replicates the viral genomic RNA on the surface of intracellular membranes. May form linear arrays of subunits that propagate along a strong head-to-tail interaction called interface-I. Covalently attaches UMP to a tyrosine of VPg, which is used to prime RNA synthesis. The positive stranded RNA genome is first replicated at virus induced membranous vesicles, creating a dsRNA genomic replication form. This dsRNA is then used as template to synthesize positive stranded RNA genomes. ss(+)RNA genomes are either translated, replicated or encapsidated. The protein is Genome polyprotein of Coxsackievirus B3 (strain Nancy).